Here is a 424-residue protein sequence, read N- to C-terminus: 26S proteasome regulatory subunit 6A homolog A (424 aa).

A disordered region spans residues M1 to S21. A2 bears the N-acetylalanine mark. At S19 the chain carries Phosphoserine. G212–T219 is an ATP binding site. K235 is covalently cross-linked (Glycyl lysine isopeptide (Lys-Gly) (interchain with G-Cter in ubiquitin)). The residue at position 278 (T278) is an O-acetylthreonine. Glycyl lysine isopeptide (Lys-Gly) (interchain with G-Cter in ubiquitin) cross-links involve residues K279 and K416.

Belongs to the AAA ATPase family. In terms of assembly, component of the 19S regulatory particle (RP/PA700) base subcomplex of the 26S proteasome. The 26S proteasome is composed of a core protease (CP), known as the 20S proteasome, capped at one or both ends by the 19S regulatory particle (RP/PA700). The RP/PA700 complex is composed of at least 17 different subunits in two subcomplexes, the base and the lid, which form the portions proximal and distal to the 20S proteolytic core, respectively. Ubiquitous.

The protein resides in the cytoplasm. Its subcellular location is the nucleus. Functionally, the 26S proteasome is involved in the ATP-dependent degradation of ubiquitinated proteins. The regulatory (or ATPase) complex confers ATP dependency and substrate specificity to the 26S complex. Interacts with transit peptides of proteins targeted to the chloroplast, and may be involved in the degradation of unimported plastid protein precursors. Plays a essential role in the gametophyte development. Involved in tolerance to zinc deficiency, possibly through alleviation of oxidative stresses or processing of poly-ubiquitinated proteins. This is 26S proteasome regulatory subunit 6A homolog A from Arabidopsis thaliana (Mouse-ear cress).